The chain runs to 329 residues: DNA-directed RNA polymerase subunit alpha (329 aa).

The alpha N-terminal domain (alpha-NTD) stretch occupies residues 1-235; sequence MQGSVIEFLK…EQLDAFVDLR (235 aa). Residues 249–329 form an alpha C-terminal domain (alpha-CTD) region; sequence FDPILLRPVD…NWPPASIAED (81 aa).

It belongs to the RNA polymerase alpha chain family. As to quaternary structure, homodimer. The RNAP catalytic core consists of 2 alpha, 1 beta, 1 beta' and 1 omega subunit. When a sigma factor is associated with the core the holoenzyme is formed, which can initiate transcription.

The enzyme catalyses RNA(n) + a ribonucleoside 5'-triphosphate = RNA(n+1) + diphosphate. Its function is as follows. DNA-dependent RNA polymerase catalyzes the transcription of DNA into RNA using the four ribonucleoside triphosphates as substrates. This is DNA-directed RNA polymerase subunit alpha from Haemophilus ducreyi (strain 35000HP / ATCC 700724).